Here is a 668-residue protein sequence, read N- to C-terminus: tRNA 5-methylaminomethyl-2-thiouridine biosynthesis bifunctional protein MnmC (668 aa).

Positions 1–245 (MKHYSIQPAN…KREMLCGVME (245 aa)) are tRNA (mnm(5)s(2)U34)-methyltransferase. Positions 270 to 668 (IGGGIACALL…LLKGKAVKAG (399 aa)) are FAD-dependent cmnm(5)s(2)U34 oxidoreductase.

In the N-terminal section; belongs to the methyltransferase superfamily. tRNA (mnm(5)s(2)U34)-methyltransferase family. The protein in the C-terminal section; belongs to the DAO family. Requires FAD as cofactor.

The protein localises to the cytoplasm. The catalysed reaction is 5-aminomethyl-2-thiouridine(34) in tRNA + S-adenosyl-L-methionine = 5-methylaminomethyl-2-thiouridine(34) in tRNA + S-adenosyl-L-homocysteine + H(+). In terms of biological role, catalyzes the last two steps in the biosynthesis of 5-methylaminomethyl-2-thiouridine (mnm(5)s(2)U) at the wobble position (U34) in tRNA. Catalyzes the FAD-dependent demodification of cmnm(5)s(2)U34 to nm(5)s(2)U34, followed by the transfer of a methyl group from S-adenosyl-L-methionine to nm(5)s(2)U34, to form mnm(5)s(2)U34. In Shigella boydii serotype 18 (strain CDC 3083-94 / BS512), this protein is tRNA 5-methylaminomethyl-2-thiouridine biosynthesis bifunctional protein MnmC.